Consider the following 419-residue polypeptide: S-adenosylmethionine synthase (419 aa).

His-14 contacts ATP. Asp-16 lines the Mg(2+) pocket. A K(+)-binding site is contributed by Glu-42. L-methionine contacts are provided by Glu-55 and Gln-98. The segment at 98-108 is flexible loop; the sequence is QSADINQGVDR. ATP-binding positions include 164 to 166, 242 to 243, Asp-251, 257 to 258, Ala-274, and Lys-278; these read DAK, KF, and RK. Asp-251 is a binding site for L-methionine. Lys-282 contacts L-methionine.

Belongs to the AdoMet synthase family. As to quaternary structure, homotetramer; dimer of dimers. It depends on Mg(2+) as a cofactor. K(+) serves as cofactor.

The protein localises to the cytoplasm. It catalyses the reaction L-methionine + ATP + H2O = S-adenosyl-L-methionine + phosphate + diphosphate. It functions in the pathway amino-acid biosynthesis; S-adenosyl-L-methionine biosynthesis; S-adenosyl-L-methionine from L-methionine: step 1/1. Catalyzes the formation of S-adenosylmethionine (AdoMet) from methionine and ATP. The overall synthetic reaction is composed of two sequential steps, AdoMet formation and the subsequent tripolyphosphate hydrolysis which occurs prior to release of AdoMet from the enzyme. This chain is S-adenosylmethionine synthase, found in Cytophaga hutchinsonii (strain ATCC 33406 / DSM 1761 / CIP 103989 / NBRC 15051 / NCIMB 9469 / D465).